The following is an 88-amino-acid chain: Exodeoxyribonuclease 7 small subunit (88 aa).

Belongs to the XseB family. In terms of assembly, heterooligomer composed of large and small subunits.

The protein resides in the cytoplasm. The enzyme catalyses Exonucleolytic cleavage in either 5'- to 3'- or 3'- to 5'-direction to yield nucleoside 5'-phosphates.. In terms of biological role, bidirectionally degrades single-stranded DNA into large acid-insoluble oligonucleotides, which are then degraded further into small acid-soluble oligonucleotides. The protein is Exodeoxyribonuclease 7 small subunit of Bordetella bronchiseptica (strain ATCC BAA-588 / NCTC 13252 / RB50) (Alcaligenes bronchisepticus).